The following is a 361-amino-acid chain: tRNA-specific 2-thiouridylase MnmA (361 aa).

ATP-binding positions include 11 to 18 (GMSGGVDS) and Met37. Catalysis depends on Cys106, which acts as the Nucleophile. Residues Cys106 and Cys202 are joined by a disulfide bond. Gly130 provides a ligand contact to ATP. An interaction with tRNA region spans residues 152 to 154 (KDQ). Cys202 (cysteine persulfide intermediate) is an active-site residue. The interaction with tRNA stretch occupies residues 308 to 309 (RY).

This sequence belongs to the MnmA/TRMU family.

It localises to the cytoplasm. The catalysed reaction is S-sulfanyl-L-cysteinyl-[protein] + uridine(34) in tRNA + AH2 + ATP = 2-thiouridine(34) in tRNA + L-cysteinyl-[protein] + A + AMP + diphosphate + H(+). Functionally, catalyzes the 2-thiolation of uridine at the wobble position (U34) of tRNA, leading to the formation of s(2)U34. This Clostridium botulinum (strain Eklund 17B / Type B) protein is tRNA-specific 2-thiouridylase MnmA.